The chain runs to 237 residues: Small ribosomal subunit protein uS2c (237 aa).

It belongs to the universal ribosomal protein uS2 family.

The protein resides in the plastid. This Epifagus virginiana (Beechdrops) protein is Small ribosomal subunit protein uS2c (rps2).